We begin with the raw amino-acid sequence, 66 residues long: MSAISYLKNSMTMHKTIYQKKVESLVKNDLFFHEKSIEKSKIMKNENVRKQLTKGYMKLLSEYKED.

The chain is SPbeta prophage-derived uncharacterized protein YopM (yopM) from Bacillus subtilis (strain 168).